Consider the following 221-residue polypeptide: NIP3 homolog (221 aa).

The interval 24–55 (GEKTDESVQPQQQTEQSSAQQTTPSAKAVSNP) is disordered. Lysine 26 participates in a covalent cross-link: Glycyl lysine isopeptide (Lys-Gly) (interchain with G-Cter in ubiquitin). Over residues 32–49 (QPQQQTEQSSAQQTTPSA) the composition is skewed to low complexity. The helical transmembrane segment at 189–209 (VVFGFLVTNIFSFVVGAAVGF) threads the bilayer. Residues 189 to 209 (VVFGFLVTNIFSFVVGAAVGF) are required for initiation of apoptosis.

This sequence belongs to the NIP3 family. In terms of assembly, homodimer; via transmembrane domain. Interacts with ced-3 and ced-9. Ubiquitinated and degraded by the proteasome. Under oxidative stress conditions, ubiquitinated at Lys-26 in a pink-1 dependent manner. Colocalizes with pdr-1 and may be ubiquitinated by it. Expressed in all somatic tissues including neurons, pharynx, intestine, body wall muscles and vulva muscles.

It localises to the mitochondrion outer membrane. Functionally, initiates apoptosis in a BH3-independent mechanism possibly by recruiting ced-3 to mitochondria and other cytoplasmic membranes. Has a role in lifespan and tumor growth. Required for the induction of mitophagy under stress conditions. The sequence is that of NIP3 homolog from Caenorhabditis elegans.